Consider the following 124-residue polypeptide: KETAAAKFERQHIDSNPSSVSSSNYCNQMMKSRNLTQGRCKPVNTFVHESLADVQAVCSQKNVACKNGQTNCYQSYSTMSITDCRETGSSKYPNCAYKTTQAKKHIIVACEGNPYVPVHYDASV.

The segment covering 1-13 (KETAAAKFERQHI) has biased composition (basic and acidic residues). The disordered stretch occupies residues 1 to 24 (KETAAAKFERQHIDSNPSSVSSSN). Residues Lys-7 and Arg-10 each contribute to the substrate site. Residue His-12 is the Proton acceptor of the active site. Low complexity predominate over residues 15–24 (SNPSSVSSSN). Intrachain disulfides connect Cys-26–Cys-84, Cys-40–Cys-95, Cys-58–Cys-110, and Cys-65–Cys-72. Asn-34 carries N-linked (GlcNAc...) asparagine; partial glycosylation. Residues 41 to 45 (KPVNT), Lys-66, and Arg-85 contribute to the substrate site. Catalysis depends on His-119, which acts as the Proton donor.

This sequence belongs to the pancreatic ribonuclease family. In terms of assembly, monomer. Interacts with and forms tight 1:1 complexes with RNH1. Dimerization of two such complexes may occur. Interaction with RNH1 inhibits this protein. Pancreas.

It localises to the secreted. It catalyses the reaction an [RNA] containing cytidine + H2O = an [RNA]-3'-cytidine-3'-phosphate + a 5'-hydroxy-ribonucleotide-3'-[RNA].. The catalysed reaction is an [RNA] containing uridine + H2O = an [RNA]-3'-uridine-3'-phosphate + a 5'-hydroxy-ribonucleotide-3'-[RNA].. Functionally, endonuclease that catalyzes the cleavage of RNA on the 3' side of pyrimidine nucleotides. Acts on single-stranded and double-stranded RNA. This is Ribonuclease pancreatic (RNASE1) from Antilocapra americana (Pronghorn).